A 253-amino-acid polypeptide reads, in one-letter code: Uroplakin-3b-like protein 1 (253 aa).

Residues 1–26 form the signal peptide; it reads MGLGRGQSPLLMALLLLLACLQMGMS. Residues 27 to 194 are Extracellular-facing; that stretch reads LERISYVPQL…PGPQTAGTVV (168 aa). N-linked (GlcNAc...) asparagine glycans are attached at residues Asn78 and Asn130. The helical transmembrane segment at 195–215 threads the bilayer; the sequence is IIAILSVLLAVLLAALLALLI. The Cytoplasmic segment spans residues 216-253; it reads FTWYDTCGSTPISGPGELVFVRKYDTHHMSRPSTVGGS.

It belongs to the uroplakin-3 family.

It localises to the membrane. This chain is Uroplakin-3b-like protein 1, found in Bos taurus (Bovine).